The primary structure comprises 419 residues: Squalene synthase R6 (419 aa).

Residues 397 to 417 (TMYLVVLLLGILGVAAAVLMA) traverse the membrane as a helical segment.

Belongs to the phytoene/squalene synthase family. Mg(2+) serves as cofactor.

It is found in the membrane. It catalyses the reaction 2 (2E,6E)-farnesyl diphosphate + NADPH + H(+) = squalene + 2 diphosphate + NADP(+). The catalysed reaction is 2 (2E,6E)-farnesyl diphosphate + NADH + H(+) = squalene + 2 diphosphate + NAD(+). It participates in terpene metabolism; lanosterol biosynthesis; lanosterol from farnesyl diphosphate: step 1/3. Squalene synthase; part of the gene cluster that mediates the biosynthesis of squalestatin S1 (SQS1, also known as zaragozic acid A), a heavily oxidized fungal polyketide that offers potent cholesterol lowering activity by targeting squalene synthase (SS). Catalyzes the condensation of 2 two farnesyl pyrophosphate moieties to form squalene. The presence of a gene encoding a squalene synthase supports the identification of the cluster as being responsible for SQS1 production and suggests a likely mechanism for self-resistance. The protein is Squalene synthase R6 of Phoma sp. (strain ATCC 20986 / MF5453).